The sequence spans 638 residues: 1-deoxy-D-xylulose-5-phosphate synthase (638 aa).

Thiamine diphosphate is bound by residues H79 and 120–122; that span reads AHS. D151 lines the Mg(2+) pocket. Thiamine diphosphate is bound by residues 152–153, N180, Y289, and E371; that span reads GA. N180 is a binding site for Mg(2+).

This sequence belongs to the transketolase family. DXPS subfamily. As to quaternary structure, homodimer. The cofactor is Mg(2+). Thiamine diphosphate is required as a cofactor.

It carries out the reaction D-glyceraldehyde 3-phosphate + pyruvate + H(+) = 1-deoxy-D-xylulose 5-phosphate + CO2. It functions in the pathway metabolic intermediate biosynthesis; 1-deoxy-D-xylulose 5-phosphate biosynthesis; 1-deoxy-D-xylulose 5-phosphate from D-glyceraldehyde 3-phosphate and pyruvate: step 1/1. Its function is as follows. Catalyzes the acyloin condensation reaction between C atoms 2 and 3 of pyruvate and glyceraldehyde 3-phosphate to yield 1-deoxy-D-xylulose-5-phosphate (DXP). In Rhizobium etli (strain CIAT 652), this protein is 1-deoxy-D-xylulose-5-phosphate synthase.